The chain runs to 311 residues: Aspartate carbamoyltransferase catalytic subunit (311 aa).

2 residues coordinate carbamoyl phosphate: Arg-55 and Thr-56. Lys-85 contributes to the L-aspartate binding site. The carbamoyl phosphate site is built by Arg-106, His-135, and Gln-138. Positions 168 and 230 each coordinate L-aspartate. Leu-268 and Pro-269 together coordinate carbamoyl phosphate.

It belongs to the aspartate/ornithine carbamoyltransferase superfamily. ATCase family. In terms of assembly, heterododecamer (2C3:3R2) of six catalytic PyrB chains organized as two trimers (C3), and six regulatory PyrI chains organized as three dimers (R2).

The catalysed reaction is carbamoyl phosphate + L-aspartate = N-carbamoyl-L-aspartate + phosphate + H(+). It participates in pyrimidine metabolism; UMP biosynthesis via de novo pathway; (S)-dihydroorotate from bicarbonate: step 2/3. Its function is as follows. Catalyzes the condensation of carbamoyl phosphate and aspartate to form carbamoyl aspartate and inorganic phosphate, the committed step in the de novo pyrimidine nucleotide biosynthesis pathway. The sequence is that of Aspartate carbamoyltransferase catalytic subunit from Yersinia pestis.